Here is a 185-residue protein sequence, read N- to C-terminus: Bcl-2-modifying factor (185 aa).

Residues 1–28 form a disordered region; that stretch reads MEPPQCVEELEDDVFQSEDGEPGTQPGG. Acidic residues predominate over residues 8 to 21; sequence EELEDDVFQSEDGE. The interaction with DLC2 stretch occupies residues 67-75; that stretch reads DKATQTLSP. A BH3 motif is present at residues 134–148; sequence IARKLQCIADQFHRL.

The protein belongs to the Bcl-2 family. Interacts with MCL1, BCL2, BCL2L1/BCL-Xl, BCL2A1 and BCL2L2/BCL-w. Interacts with the myosin V actin motor complex through its binding to DLC2. Widely expressed with an abundant expression in pancreas, liver kidney and hematopoietic tissues.

Functionally, may play a role in apoptosis. The protein is Bcl-2-modifying factor (Bmf) of Mus musculus (Mouse).